The primary structure comprises 145 residues: D-aminoacyl-tRNA deacylase (145 aa).

The Gly-cisPro motif, important for rejection of L-amino acids signature appears at 137-138 (GP).

The protein belongs to the DTD family. Homodimer.

The protein resides in the cytoplasm. The catalysed reaction is glycyl-tRNA(Ala) + H2O = tRNA(Ala) + glycine + H(+). It catalyses the reaction a D-aminoacyl-tRNA + H2O = a tRNA + a D-alpha-amino acid + H(+). Its function is as follows. An aminoacyl-tRNA editing enzyme that deacylates mischarged D-aminoacyl-tRNAs. Also deacylates mischarged glycyl-tRNA(Ala), protecting cells against glycine mischarging by AlaRS. Acts via tRNA-based rather than protein-based catalysis; rejects L-amino acids rather than detecting D-amino acids in the active site. By recycling D-aminoacyl-tRNA to D-amino acids and free tRNA molecules, this enzyme counteracts the toxicity associated with the formation of D-aminoacyl-tRNA entities in vivo and helps enforce protein L-homochirality. In Shewanella oneidensis (strain ATCC 700550 / JCM 31522 / CIP 106686 / LMG 19005 / NCIMB 14063 / MR-1), this protein is D-aminoacyl-tRNA deacylase.